The chain runs to 238 residues: Phosphoribosylaminoimidazole-succinocarboxamide synthase (238 aa).

It belongs to the SAICAR synthetase family.

The catalysed reaction is 5-amino-1-(5-phospho-D-ribosyl)imidazole-4-carboxylate + L-aspartate + ATP = (2S)-2-[5-amino-1-(5-phospho-beta-D-ribosyl)imidazole-4-carboxamido]succinate + ADP + phosphate + 2 H(+). Its pathway is purine metabolism; IMP biosynthesis via de novo pathway; 5-amino-1-(5-phospho-D-ribosyl)imidazole-4-carboxamide from 5-amino-1-(5-phospho-D-ribosyl)imidazole-4-carboxylate: step 1/2. The chain is Phosphoribosylaminoimidazole-succinocarboxamide synthase from Alcanivorax borkumensis (strain ATCC 700651 / DSM 11573 / NCIMB 13689 / SK2).